Here is a 187-residue protein sequence, read N- to C-terminus: Translation machinery-associated protein 22 (187 aa).

Residues 94 to 165 enclose the SUI1 domain; it reads VTIKRIERNK…EIEEFILEKY (72 aa).

This sequence belongs to the DENR family. In terms of assembly, interacts with the 40S ribosomal subunit.

The protein resides in the cytoplasm. The chain is Translation machinery-associated protein 22 (tma-22) from Neurospora crassa (strain ATCC 24698 / 74-OR23-1A / CBS 708.71 / DSM 1257 / FGSC 987).